Consider the following 198-residue polypeptide: Guanine nucleotide-binding protein subunit alpha-11 (198 aa).

Positions L1–T11 are G1 motif. The 198-residue stretch at L1–E198 folds into the G-alpha domain. GTP-binding positions include G3–S10 and L137–R140. Residue S10 participates in Mg(2+) binding. The interval D135–T143 is G2 motif. Residue T143 coordinates Mg(2+). The segment at F158 to R167 is G3 motif.

It belongs to the G-alpha family. G(q) subfamily. In terms of assembly, g proteins are composed of 3 units; alpha, beta and gamma. The alpha chain contains the guanine nucleotide binding site. Interacts with RGS22. Interacts with NTSR1.

It is found in the cell membrane. The protein localises to the cytoplasm. It catalyses the reaction GTP + H2O = GDP + phosphate + H(+). In terms of biological role, guanine nucleotide-binding proteins (G proteins) function as transducers downstream of G protein-coupled receptors (GPCRs) in numerous signaling cascades. The alpha chain contains the guanine nucleotide binding site and alternates between an active, GTP-bound state and an inactive, GDP-bound state. Signaling by an activated GPCR promotes GDP release and GTP binding. The alpha subunit has a low GTPase activity that converts bound GTP to GDP, thereby terminating the signal. Both GDP release and GTP hydrolysis are modulated by numerous regulatory proteins. Signaling is mediated via phospholipase C-beta-dependent inositol lipid hydrolysis for signal propagation: activates phospholipase C-beta: following GPCR activation, GNA11 activates PLC-beta (PLCB1, PLCB2, PLCB3 or PLCB4), leading to production of diacylglycerol (DAG) and inositol 1,4,5-trisphosphate (IP3). Transduces FFAR4 signaling in response to long-chain fatty acids (LCFAs). Together with GNAQ, required for heart development. In the respiratory epithelium, transmits OXGR1-dependent signals that lead to downstream intracellular Ca(2+) release and mucocilliary clearance of airborne pathogens. The sequence is that of Guanine nucleotide-binding protein subunit alpha-11 (GNA11) from Canis lupus familiaris (Dog).